Consider the following 166-residue polypeptide: Large ribosomal subunit protein uL10 (166 aa).

The protein belongs to the universal ribosomal protein uL10 family. As to quaternary structure, part of the ribosomal stalk of the 50S ribosomal subunit. The N-terminus interacts with L11 and the large rRNA to form the base of the stalk. The C-terminus forms an elongated spine to which L12 dimers bind in a sequential fashion forming a multimeric L10(L12)X complex.

Forms part of the ribosomal stalk, playing a central role in the interaction of the ribosome with GTP-bound translation factors. This chain is Large ribosomal subunit protein uL10, found in Stutzerimonas stutzeri (strain A1501) (Pseudomonas stutzeri).